The sequence spans 146 residues: Anti-sigma F factor (146 aa).

It belongs to the anti-sigma-factor family.

It catalyses the reaction L-seryl-[protein] + ATP = O-phospho-L-seryl-[protein] + ADP + H(+). It carries out the reaction L-threonyl-[protein] + ATP = O-phospho-L-threonyl-[protein] + ADP + H(+). Its function is as follows. Binds to sigma F and blocks its ability to form an RNA polymerase holoenzyme (E-sigma F). Phosphorylates SpoIIAA on a serine residue. This phosphorylation may enable SpoIIAA to act as an anti-anti-sigma factor that counteracts SpoIIAB and thus releases sigma F from inhibition. In Anoxybacillus flavithermus (strain DSM 21510 / WK1), this protein is Anti-sigma F factor.